A 319-amino-acid polypeptide reads, in one-letter code: Phosphoribosylformylglycinamidine cyclo-ligase (319 aa).

This sequence belongs to the AIR synthase family.

It is found in the cytoplasm. The enzyme catalyses 2-formamido-N(1)-(5-O-phospho-beta-D-ribosyl)acetamidine + ATP = 5-amino-1-(5-phospho-beta-D-ribosyl)imidazole + ADP + phosphate + H(+). Its pathway is purine metabolism; IMP biosynthesis via de novo pathway; 5-amino-1-(5-phospho-D-ribosyl)imidazole from N(2)-formyl-N(1)-(5-phospho-D-ribosyl)glycinamide: step 2/2. In Sulfurisphaera tokodaii (strain DSM 16993 / JCM 10545 / NBRC 100140 / 7) (Sulfolobus tokodaii), this protein is Phosphoribosylformylglycinamidine cyclo-ligase.